The chain runs to 201 residues: Holliday junction branch migration complex subunit RuvA (201 aa).

Positions 1 to 63 (MYAYIKGKLS…EDAQLLYGFM (63 aa)) are domain I. The domain II stretch occupies residues 64–142 (SEEEKGMFLS…ITEENPETLL (79 aa)). Positions 143 to 153 (NFEGSESNQTS) are flexible linker. The domain III stretch occupies residues 153–201 (SPILDEALLALEALGYSKRELNKVEKKLQAESYTSVDEAVKAGLKILVS).

Belongs to the RuvA family. In terms of assembly, homotetramer. Forms an RuvA(8)-RuvB(12)-Holliday junction (HJ) complex. HJ DNA is sandwiched between 2 RuvA tetramers; dsDNA enters through RuvA and exits via RuvB. An RuvB hexamer assembles on each DNA strand where it exits the tetramer. Each RuvB hexamer is contacted by two RuvA subunits (via domain III) on 2 adjacent RuvB subunits; this complex drives branch migration. In the full resolvosome a probable DNA-RuvA(4)-RuvB(12)-RuvC(2) complex forms which resolves the HJ.

It is found in the cytoplasm. In terms of biological role, the RuvA-RuvB-RuvC complex processes Holliday junction (HJ) DNA during genetic recombination and DNA repair, while the RuvA-RuvB complex plays an important role in the rescue of blocked DNA replication forks via replication fork reversal (RFR). RuvA specifically binds to HJ cruciform DNA, conferring on it an open structure. The RuvB hexamer acts as an ATP-dependent pump, pulling dsDNA into and through the RuvAB complex. HJ branch migration allows RuvC to scan DNA until it finds its consensus sequence, where it cleaves and resolves the cruciform DNA. The polypeptide is Holliday junction branch migration complex subunit RuvA (Staphylococcus carnosus (strain TM300)).